A 25-amino-acid polypeptide reads, in one-letter code: Caerin-1.5 (25 aa).

L25 carries the leucine amide modification.

Expressed by the skin parotoid and/or rostral glands.

It is found in the secreted. In terms of biological role, antibacterial peptide, that adopts an alpha helical conformation which can disrupt bacterial membranes. Each caerin displays a different antimicrobial specificity. The protein is Caerin-1.5 of Ranoidea caerulea (Green tree frog).